The sequence spans 542 residues: NXPE family member 4 (542 aa).

The N-terminal stretch at methionine 1–phenylalanine 26 is a signal peptide. Residues asparagine 91, asparagine 92, asparagine 159, and asparagine 223 are each glycosylated (N-linked (GlcNAc...) asparagine).

The protein belongs to the NXPE family.

The protein resides in the secreted. This is NXPE family member 4 (Nxpe4) from Rattus norvegicus (Rat).